We begin with the raw amino-acid sequence, 375 residues long: 23S rRNA (uracil(747)-C(5))-methyltransferase RlmC (375 aa).

[4Fe-4S] cluster is bound by residues Cys3, Cys11, Cys14, and Cys87. S-adenosyl-L-methionine-binding residues include Gln212, Phe241, Glu262, and Asn307. Cys334 (nucleophile) is an active-site residue.

Belongs to the class I-like SAM-binding methyltransferase superfamily. RNA M5U methyltransferase family. RlmC subfamily.

The catalysed reaction is uridine(747) in 23S rRNA + S-adenosyl-L-methionine = 5-methyluridine(747) in 23S rRNA + S-adenosyl-L-homocysteine + H(+). Functionally, catalyzes the formation of 5-methyl-uridine at position 747 (m5U747) in 23S rRNA. The sequence is that of 23S rRNA (uracil(747)-C(5))-methyltransferase RlmC from Yersinia enterocolitica serotype O:8 / biotype 1B (strain NCTC 13174 / 8081).